The sequence spans 204 residues: Large ribosomal subunit protein eL15y (204 aa).

It belongs to the eukaryotic ribosomal protein eL15 family.

The polypeptide is Large ribosomal subunit protein eL15y (SB62) (Picea mariana (Black spruce)).